Here is a 430-residue protein sequence, read N- to C-terminus: tRNA(Ile)-lysidine synthase (430 aa).

Residue 24–29 (SGGLDS) coordinates ATP.

It belongs to the tRNA(Ile)-lysidine synthase family.

It localises to the cytoplasm. It carries out the reaction cytidine(34) in tRNA(Ile2) + L-lysine + ATP = lysidine(34) in tRNA(Ile2) + AMP + diphosphate + H(+). Ligates lysine onto the cytidine present at position 34 of the AUA codon-specific tRNA(Ile) that contains the anticodon CAU, in an ATP-dependent manner. Cytidine is converted to lysidine, thus changing the amino acid specificity of the tRNA from methionine to isoleucine. The protein is tRNA(Ile)-lysidine synthase of Haemophilus influenzae (strain ATCC 51907 / DSM 11121 / KW20 / Rd).